A 688-amino-acid polypeptide reads, in one-letter code: Polyribonucleotide nucleotidyltransferase (688 aa).

Mg(2+) is bound by residues D484 and D490. The region spanning 550-609 (PTTEIFNVAPDKIVEIIGQGGRVIKEIVEKFEVKIDLNKPSGEVKIMGNKERVLKTKEFI) is the KH domain. The S1 motif domain occupies 626–688 (DEVLEAQVKR…NKGKIALDLA (63 aa)).

The protein belongs to the polyribonucleotide nucleotidyltransferase family. Requires Mg(2+) as cofactor.

It is found in the cytoplasm. The catalysed reaction is RNA(n+1) + phosphate = RNA(n) + a ribonucleoside 5'-diphosphate. Involved in mRNA degradation. Catalyzes the phosphorolysis of single-stranded polyribonucleotides processively in the 3'- to 5'-direction. The chain is Polyribonucleotide nucleotidyltransferase from Helicobacter pylori (strain HPAG1).